We begin with the raw amino-acid sequence, 149 residues long: Succinate dehydrogenase assembly factor 2, mitochondrial (149 aa).

It belongs to the SDHAF2 family. In terms of assembly, interacts with the flavoprotein subunit within the SDH catalytic dimer.

Its subcellular location is the mitochondrion matrix. Its function is as follows. Plays an essential role in the assembly of succinate dehydrogenase (SDH), an enzyme complex (also referred to as respiratory complex II) that is a component of both the tricarboxylic acid (TCA) cycle and the mitochondrial electron transport chain, and which couples the oxidation of succinate to fumarate with the reduction of ubiquinone (coenzyme Q) to ubiquinol. Required for flavinylation (covalent attachment of FAD) of the flavoprotein subunit of the SDH catalytic dimer. This is Succinate dehydrogenase assembly factor 2, mitochondrial from Scheffersomyces stipitis (strain ATCC 58785 / CBS 6054 / NBRC 10063 / NRRL Y-11545) (Yeast).